A 412-amino-acid chain; its full sequence is CCA-adding enzyme (412 aa).

Positions 8 and 11 each coordinate ATP. CTP-binding residues include Gly8 and Arg11. Residues Asp21 and Asp23 each contribute to the Mg(2+) site. The ATP site is built by Arg91, Arg137, and Arg140. CTP contacts are provided by Arg91, Arg137, and Arg140.

Belongs to the tRNA nucleotidyltransferase/poly(A) polymerase family. Bacterial CCA-adding enzyme type 2 subfamily. Mg(2+) is required as a cofactor.

It catalyses the reaction a tRNA precursor + 2 CTP + ATP = a tRNA with a 3' CCA end + 3 diphosphate. The catalysed reaction is a tRNA with a 3' CCA end + 2 CTP + ATP = a tRNA with a 3' CCACCA end + 3 diphosphate. Functionally, catalyzes the addition and repair of the essential 3'-terminal CCA sequence in tRNAs without using a nucleic acid template. Adds these three nucleotides in the order of C, C, and A to the tRNA nucleotide-73, using CTP and ATP as substrates and producing inorganic pyrophosphate. tRNA 3'-terminal CCA addition is required both for tRNA processing and repair. Also involved in tRNA surveillance by mediating tandem CCA addition to generate a CCACCA at the 3' terminus of unstable tRNAs. While stable tRNAs receive only 3'-terminal CCA, unstable tRNAs are marked with CCACCA and rapidly degraded. The polypeptide is CCA-adding enzyme (Buchnera aphidicola subsp. Schizaphis graminum (strain Sg)).